We begin with the raw amino-acid sequence, 283 residues long: ATP phosphoribosyltransferase (283 aa).

The protein belongs to the ATP phosphoribosyltransferase family. Long subfamily. The cofactor is Mg(2+).

It localises to the cytoplasm. It carries out the reaction 1-(5-phospho-beta-D-ribosyl)-ATP + diphosphate = 5-phospho-alpha-D-ribose 1-diphosphate + ATP. The protein operates within amino-acid biosynthesis; L-histidine biosynthesis; L-histidine from 5-phospho-alpha-D-ribose 1-diphosphate: step 1/9. Feedback inhibited by histidine. In terms of biological role, catalyzes the condensation of ATP and 5-phosphoribose 1-diphosphate to form N'-(5'-phosphoribosyl)-ATP (PR-ATP). Has a crucial role in the pathway because the rate of histidine biosynthesis seems to be controlled primarily by regulation of HisG enzymatic activity. This is ATP phosphoribosyltransferase from Methanopyrus kandleri (strain AV19 / DSM 6324 / JCM 9639 / NBRC 100938).